The sequence spans 254 residues: 3-dehydroquinate dehydratase (254 aa).

3-dehydroquinate is bound by residues 47 to 49 (EWR) and R83. H144 functions as the Proton donor/acceptor in the catalytic mechanism. Catalysis depends on K171, which acts as the Schiff-base intermediate with substrate. 3-dehydroquinate is bound by residues R214, S233, and Q237.

Belongs to the type-I 3-dehydroquinase family. Homodimer.

It carries out the reaction 3-dehydroquinate = 3-dehydroshikimate + H2O. Its pathway is metabolic intermediate biosynthesis; chorismate biosynthesis; chorismate from D-erythrose 4-phosphate and phosphoenolpyruvate: step 3/7. In terms of biological role, involved in the third step of the chorismate pathway, which leads to the biosynthesis of aromatic amino acids. Catalyzes the cis-dehydration of 3-dehydroquinate (DHQ) and introduces the first double bond of the aromatic ring to yield 3-dehydroshikimate. This Clostridium botulinum (strain Eklund 17B / Type B) protein is 3-dehydroquinate dehydratase.